A 724-amino-acid chain; its full sequence is MPRNSGAGYGCPHGDPSMLDSRETPQESRQDMTVGTTQEKLKTSSLTDRQPLSKESLNHALKLSVPEKVNNAQWDAPEEALWTTRADGRVRLRIDPSCPQLPYTVHRMFYEALDKYGDFSALGFKCQDKWEHISYSQYYLLARRAAKGFLKLGLERAHSVAILGFNSPEWFFSAVGTVFAGGIVTGIYTTSSPEACQYIAYDCCANVIMVDTQKQLEKILKVWKQLPHLKAVVIYKEPPPNKMANVYTMEEFMELGNEVPEEALDAIIDTQQPNQCCVLVYTSGTTGNPKGVMLSQDNITWTARYGSQAGDIRPAEVQQEVVVSYLPLSHIAAQIYDLWTGIQWGAQVCFAEPDALKGSLVNTLREVEPTSHMGVPRVWEKIMERIQEVAAQSGFIRRKMLLWAMSVTLEQNLTCPGSDLKPFTTRLADYLVLAKVRQALGFAKCQKNFYGAAPMTAETQHFFLGLNIRLYAGYGLSETSGPHFMSSPCNYRLYSSGKLVPGCRVKLVNQDTEGIGEICLWGRTIFMGYLNMEDKTCEAIDEEGWLHTGDAGRLDADGFLYITGRLKELIITAGGENVPPVPIEEAVKMELPIISNAMLIGTDQRKFLSMLLTLKCTLDPDTSDPTDNLTEQAVEFCQRVGSRATTVSEIVGKDEAVYQAIEEGIRRVNMNAAARPYHIQKWAILERDFSISGGELGPTMKLKRLTVLEKYKDIIDSFYREQKM.

The disordered stretch occupies residues 1–51; the sequence is MPRNSGAGYGCPHGDPSMLDSRETPQESRQDMTVGTTQEKLKTSSLTDRQP. The span at 20–30 shows a compositional bias: basic and acidic residues; that stretch reads DSRETPQESRQ. Polar residues predominate over residues 31–51; sequence DMTVGTTQEKLKTSSLTDRQP. Residues serine 53 and serine 56 each carry the phosphoserine modification. ATP is bound by residues 282 to 290, 472 to 477, aspartate 550, and arginine 565; these read TSGTTGNPK and AGYGLS. A Phosphotyrosine modification is found at tyrosine 658. Residue lysine 701 coordinates ATP.

It belongs to the ATP-dependent AMP-binding enzyme family. Bubblegum subfamily.

Its subcellular location is the cytoplasm. The protein localises to the cytoplasmic vesicle. The protein resides in the microsome. It is found in the endoplasmic reticulum. It localises to the cell membrane. It carries out the reaction a long-chain fatty acid + ATP + CoA = a long-chain fatty acyl-CoA + AMP + diphosphate. The enzyme catalyses (E)-hexadec-2-enoate + ATP + CoA = (2E)-hexadecenoyl-CoA + AMP + diphosphate. It catalyses the reaction hexadecanoate + ATP + CoA = hexadecanoyl-CoA + AMP + diphosphate. Its function is as follows. Catalyzes the conversion of fatty acids such as long-chain and very long-chain fatty acids to their active form acyl-CoAs for both synthesis of cellular lipids, and degradation via beta-oxidation. Can activate diverse saturated, monosaturated and polyunsaturated fatty acids. In Macaca fascicularis (Crab-eating macaque), this protein is Long-chain-fatty-acid--CoA ligase ACSBG1.